The primary structure comprises 383 residues: tRNA(Met) cytidine acetate ligase (383 aa).

ATP contacts are provided by residues 7-20, G101, N153, and 178-179; these read IAEF…HEFL and RI.

It belongs to the TmcAL family.

It is found in the cytoplasm. It carries out the reaction cytidine(34) in elongator tRNA(Met) + acetate + ATP = N(4)-acetylcytidine(34) in elongator tRNA(Met) + AMP + diphosphate. Functionally, catalyzes the formation of N(4)-acetylcytidine (ac(4)C) at the wobble position of elongator tRNA(Met), using acetate and ATP as substrates. First activates an acetate ion to form acetyladenylate (Ac-AMP) and then transfers the acetyl group to tRNA to form ac(4)C34. The sequence is that of tRNA(Met) cytidine acetate ligase from Lactobacillus acidophilus (strain ATCC 700396 / NCK56 / N2 / NCFM).